The following is a 299-amino-acid chain: Putative ankyrin repeat protein R864 (299 aa).

ANK repeat units follow at residues 78 to 107 (SLNK…NIES), 108 to 137 (NNNY…NIKS), 139 to 167 (NNRV…DIRS), 168 to 197 (NDDY…DIRS), 199 to 227 (YYYI…DIRA), 228 to 257 (YNNC…DIRN), and 258 to 287 (DNDY…DIKT).

This is Putative ankyrin repeat protein R864 from Acanthamoeba polyphaga mimivirus (APMV).